Reading from the N-terminus, the 345-residue chain is UDP-3-O-acylglucosamine N-acyltransferase (345 aa).

His-237 acts as the Proton acceptor in catalysis.

It belongs to the transferase hexapeptide repeat family. LpxD subfamily. Homotrimer.

It catalyses the reaction a UDP-3-O-[(3R)-3-hydroxyacyl]-alpha-D-glucosamine + a (3R)-hydroxyacyl-[ACP] = a UDP-2-N,3-O-bis[(3R)-3-hydroxyacyl]-alpha-D-glucosamine + holo-[ACP] + H(+). Its pathway is bacterial outer membrane biogenesis; LPS lipid A biosynthesis. In terms of biological role, catalyzes the N-acylation of UDP-3-O-acylglucosamine using 3-hydroxyacyl-ACP as the acyl donor. Is involved in the biosynthesis of lipid A, a phosphorylated glycolipid that anchors the lipopolysaccharide to the outer membrane of the cell. In Geobacter sp. (strain M21), this protein is UDP-3-O-acylglucosamine N-acyltransferase.